The sequence spans 319 residues: Glutamyl-Q tRNA(Asp) synthetase (319 aa).

L-glutamate is bound by residues 23 to 27 (RFAPS) and E59. A 'HIGH' region motif is present at residues 26 to 36 (PSPSGPLHAGS). Positions 115, 117, 139, and 143 each coordinate Zn(2+). 2 residues coordinate L-glutamate: Y197 and R215. Residues 254–258 (KLSKQ) carry the 'KMSKS' region motif. K257 provides a ligand contact to ATP.

Belongs to the class-I aminoacyl-tRNA synthetase family. GluQ subfamily. Requires Zn(2+) as cofactor.

In terms of biological role, catalyzes the tRNA-independent activation of glutamate in presence of ATP and the subsequent transfer of glutamate onto a tRNA(Asp). Glutamate is transferred on the 2-amino-5-(4,5-dihydroxy-2-cyclopenten-1-yl) moiety of the queuosine in the wobble position of the QUC anticodon. In Bordetella bronchiseptica (strain ATCC BAA-588 / NCTC 13252 / RB50) (Alcaligenes bronchisepticus), this protein is Glutamyl-Q tRNA(Asp) synthetase.